The sequence spans 171 residues: MVKPKRLLSLLLRLIAFGATLAAVIIMATSHEKGSFFALSYEAKYSDTPAFKYFVIANAIVTVYGFLALFIPSESPLWRLVLALDLVFTMLLISSISAALAVAQVGKKGNSSAGWLPVCGQVTKYCNQVTGALVAGFIAIITYIILLLYSIYTFLNSLLGKTPCRLSSPGI.

Topologically, residues 1–6 are cytoplasmic; it reads MVKPKR. Residues 7–27 traverse the membrane as a helical segment; the sequence is LLSLLLRLIAFGATLAAVIIM. Residues 28-52 lie on the Extracellular side of the membrane; that stretch reads ATSHEKGSFFALSYEAKYSDTPAFK. A helical transmembrane segment spans residues 53-73; the sequence is YFVIANAIVTVYGFLALFIPS. At 74–79 the chain is on the cytoplasmic side; sequence ESPLWR. A helical transmembrane segment spans residues 80–100; that stretch reads LVLALDLVFTMLLISSISAAL. Residues 101-130 are Extracellular-facing; it reads AVAQVGKKGNSSAGWLPVCGQVTKYCNQVT. Residue Asn-110 is glycosylated (N-linked (GlcNAc...) asparagine). Residues 131–151 form a helical membrane-spanning segment; that stretch reads GALVAGFIAIITYIILLLYSI. Residues 152-171 lie on the Cytoplasmic side of the membrane; it reads YTFLNSLLGKTPCRLSSPGI.

This sequence belongs to the Casparian strip membrane proteins (CASP) family. As to quaternary structure, homodimer and heterodimers.

It is found in the cell membrane. This chain is CASP-like protein 1C3, found in Populus trichocarpa (Western balsam poplar).